The chain runs to 239 residues: Serine protease SplD (239 aa).

An N-terminal signal peptide occupies residues 1 to 36; that stretch reads MNKNIIIKSIAALTILTSITGVGTTVVDGIQQTAKA. Active-site charge relay system residues include His75, Asp114, and Ser192.

It belongs to the peptidase S1B family.

It is found in the secreted. This chain is Serine protease SplD (splD), found in Staphylococcus aureus (strain Mu3 / ATCC 700698).